The chain runs to 545 residues: Glucose-6-phosphate isomerase (545 aa).

Glutamate 351 acts as the Proton donor in catalysis. Residues histidine 382 and lysine 510 contribute to the active site.

It belongs to the GPI family.

Its subcellular location is the cytoplasm. It catalyses the reaction alpha-D-glucose 6-phosphate = beta-D-fructose 6-phosphate. Its pathway is carbohydrate biosynthesis; gluconeogenesis. It participates in carbohydrate degradation; glycolysis; D-glyceraldehyde 3-phosphate and glycerone phosphate from D-glucose: step 2/4. Catalyzes the reversible isomerization of glucose-6-phosphate to fructose-6-phosphate. This chain is Glucose-6-phosphate isomerase, found in Shewanella sp. (strain MR-7).